Consider the following 286-residue polypeptide: ATP synthase gamma chain (286 aa).

This sequence belongs to the ATPase gamma chain family. In terms of assembly, F-type ATPases have 2 components, CF(1) - the catalytic core - and CF(0) - the membrane proton channel. CF(1) has five subunits: alpha(3), beta(3), gamma(1), delta(1), epsilon(1). CF(0) has three main subunits: a, b and c.

Its subcellular location is the cell inner membrane. In terms of biological role, produces ATP from ADP in the presence of a proton gradient across the membrane. The gamma chain is believed to be important in regulating ATPase activity and the flow of protons through the CF(0) complex. This is ATP synthase gamma chain from Pseudomonas putida (strain W619).